The following is a 159-amino-acid chain: Large ribosomal subunit protein uL30 (159 aa).

This sequence belongs to the universal ribosomal protein uL30 family. Part of the 50S ribosomal subunit.

The chain is Large ribosomal subunit protein uL30 from Ignicoccus hospitalis (strain KIN4/I / DSM 18386 / JCM 14125).